A 202-amino-acid chain; its full sequence is LexA repressor (202 aa).

The H-T-H motif DNA-binding region spans 28–48; that stretch reads RAEIAQQLGFRSPNAAEEHLK. Residues serine 119 and lysine 156 each act as for autocatalytic cleavage activity in the active site.

Belongs to the peptidase S24 family. Homodimer.

It catalyses the reaction Hydrolysis of Ala-|-Gly bond in repressor LexA.. Represses a number of genes involved in the response to DNA damage (SOS response), including recA and lexA. Binds to the 16 bp palindromic sequence 5'-CTGTATATATATACAG-3'. In the presence of single-stranded DNA, RecA interacts with LexA causing an autocatalytic cleavage which disrupts the DNA-binding part of LexA, leading to derepression of the SOS regulon and eventually DNA repair. The protein is LexA repressor of Pectobacterium carotovorum subsp. carotovorum (Erwinia carotovora subsp. carotovora).